The following is a 743-amino-acid chain: Tegument protein UL46 homolog (743 aa).

Disordered regions lie at residues 437-481 (GCPP…VSSA), 522-590 (HQRS…SGYM), and 693-743 (RVRL…VSSL). Positions 526–552 (DSSSSDNSSCSSTETEYITISSTPSPT) are enriched in low complexity. Polar residues-rich tracts occupy residues 573-586 (QPAN…SPAN) and 697-716 (GTTT…TPSS). Positions 722–743 (RTLSTSESPESSPEQQERVSSL) are enriched in low complexity.

This sequence belongs to the herpesviridae HHV-1 VP11/12 protein family. Interacts with VP16.

Its subcellular location is the virion tegument. The protein resides in the host cell membrane. Functionally, abundant tegument protein. Trans-activates the immediate early genes. In Equus caballus (Horse), this protein is Tegument protein UL46 homolog.